A 391-amino-acid chain; its full sequence is Multidrug resistance protein MdtL (391 aa).

12 consecutive transmembrane segments (helical) span residues 4–24, 42–62, 69–89, 93–113, 131–151, 158–178, 203–222, 245–265, 269–289, 293–313, 331–351, and 356–376; these read FLIC…MYLV, IAFS…GKVA, PVAI…SLAE, LFLA…VVAF, LLNG…HLIM, SLFW…LFIL, FFLS…LTFV, ALTA…LGIF, TLMI…AVSP, VSLF…GVAM, LGIA…VVGI, and MLIG…MFVA.

Belongs to the major facilitator superfamily. DHA1 family. MdtL (TC 2.A.1.2.22) subfamily.

It localises to the cell inner membrane. Its function is as follows. Confers resistance to chloramphenicol. The chain is Multidrug resistance protein MdtL from Escherichia coli (strain 55989 / EAEC).